Consider the following 223-residue polypeptide: MOB-like protein phocein (223 aa).

Residues 1 to 23 (MTAATENRTVRRNGPGTKRADWN) are disordered. Positions 92, 97, 169, and 174 each coordinate Zn(2+).

The protein belongs to the MOB1/phocein family.

Its subcellular location is the cytoplasm. The protein resides in the perinuclear region. It is found in the membrane. The protein localises to the golgi apparatus. It localises to the golgi stack membrane. Its function is as follows. May play a role in membrane trafficking, specifically in membrane budding reactions. This is MOB-like protein phocein from Caenorhabditis elegans.